The sequence spans 61 residues: UPF0434 protein MS0934 (61 aa).

It belongs to the UPF0434 family.

This Mannheimia succiniciproducens (strain KCTC 0769BP / MBEL55E) protein is UPF0434 protein MS0934.